The sequence spans 159 residues: 2-C-methyl-D-erythritol 2,4-cyclodiphosphate synthase (159 aa).

A divalent metal cation-binding residues include D10 and H12. 4-CDP-2-C-methyl-D-erythritol 2-phosphate-binding positions include 10-12 (DVH) and 36-37 (HS). An a divalent metal cation-binding site is contributed by H44. Residues 58-60 (DIG), 134-137 (TTTE), F141, and R144 each bind 4-CDP-2-C-methyl-D-erythritol 2-phosphate.

The protein belongs to the IspF family. Homotrimer. A divalent metal cation serves as cofactor.

The catalysed reaction is 4-CDP-2-C-methyl-D-erythritol 2-phosphate = 2-C-methyl-D-erythritol 2,4-cyclic diphosphate + CMP. It participates in isoprenoid biosynthesis; isopentenyl diphosphate biosynthesis via DXP pathway; isopentenyl diphosphate from 1-deoxy-D-xylulose 5-phosphate: step 4/6. In terms of biological role, involved in the biosynthesis of isopentenyl diphosphate (IPP) and dimethylallyl diphosphate (DMAPP), two major building blocks of isoprenoid compounds. Catalyzes the conversion of 4-diphosphocytidyl-2-C-methyl-D-erythritol 2-phosphate (CDP-ME2P) to 2-C-methyl-D-erythritol 2,4-cyclodiphosphate (ME-CPP) with a corresponding release of cytidine 5-monophosphate (CMP). In Bacteroides fragilis (strain YCH46), this protein is 2-C-methyl-D-erythritol 2,4-cyclodiphosphate synthase.